Reading from the N-terminus, the 309-residue chain is uncharacterized protein (309 aa).

The protein belongs to the anthranilate phosphoribosyltransferase family.

This is an uncharacterized protein from Aquifex aeolicus (strain VF5).